Consider the following 361-residue polypeptide: Peptide chain release factor 1 (361 aa).

An N5-methylglutamine modification is found at Gln237.

Belongs to the prokaryotic/mitochondrial release factor family. Methylated by PrmC. Methylation increases the termination efficiency of RF1.

The protein resides in the cytoplasm. Functionally, peptide chain release factor 1 directs the termination of translation in response to the peptide chain termination codons UAG and UAA. The polypeptide is Peptide chain release factor 1 (Alcanivorax borkumensis (strain ATCC 700651 / DSM 11573 / NCIMB 13689 / SK2)).